We begin with the raw amino-acid sequence, 188 residues long: MNITATVLLAFGMSMDAFAASIGKGATLHKPKFSEALRTGLIFGAVETLTPLIGWGMGMLASRFVLEWNHWIAFVLLIFLGGRMIIEGFRGADDEDEEPRRRHGFWLLVTTAIATSLDAMAVGVGLAFLQVNIIATALAIGCATLIMSTLGMMVGRFIGSIIGKKAEILGGLVLIGIGVQILWTHFHG.

5 helical membrane passes run 3-23 (ITAT…ASIG), 66-86 (LEWN…RMII), 106-128 (WLLV…GLAF), 143-163 (ATLI…SIIG), and 168-188 (ILGG…HFHG).

Belongs to the MntP (TC 9.B.29) family.

It localises to the cell inner membrane. Functionally, probably functions as a manganese efflux pump. This Escherichia coli O139:H28 (strain E24377A / ETEC) protein is Probable manganese efflux pump MntP.